The sequence spans 729 residues: Fatty acid oxidation complex subunit alpha (729 aa).

Positions 1 to 189 (MLYKGDTLYL…KIGLVDGVVK (189 aa)) are enoyl-CoA hydratase/isomerase. A substrate-binding site is contributed by Asp296. Residues 311–729 (ETPKQAAVLG…ARPVGSLKTA (419 aa)) form a 3-hydroxyacyl-CoA dehydrogenase region. NAD(+) contacts are provided by residues Met324, Asp343, 400 to 402 (VVE), Lys407, and Ser429. Catalysis depends on His450, which acts as the For 3-hydroxyacyl-CoA dehydrogenase activity. Residue Asn453 coordinates NAD(+). 2 residues coordinate substrate: Asn500 and Tyr660. The tract at residues 708 to 729 (RHNEPYYPPVEPARPVGSLKTA) is disordered.

This sequence in the N-terminal section; belongs to the enoyl-CoA hydratase/isomerase family. It in the C-terminal section; belongs to the 3-hydroxyacyl-CoA dehydrogenase family. Heterotetramer of two alpha chains (FadB) and two beta chains (FadA).

The enzyme catalyses a (3S)-3-hydroxyacyl-CoA + NAD(+) = a 3-oxoacyl-CoA + NADH + H(+). It carries out the reaction a (3S)-3-hydroxyacyl-CoA = a (2E)-enoyl-CoA + H2O. The catalysed reaction is a 4-saturated-(3S)-3-hydroxyacyl-CoA = a (3E)-enoyl-CoA + H2O. It catalyses the reaction (3S)-3-hydroxybutanoyl-CoA = (3R)-3-hydroxybutanoyl-CoA. The enzyme catalyses a (3Z)-enoyl-CoA = a 4-saturated (2E)-enoyl-CoA. It carries out the reaction a (3E)-enoyl-CoA = a 4-saturated (2E)-enoyl-CoA. It participates in lipid metabolism; fatty acid beta-oxidation. Its function is as follows. Involved in the aerobic and anaerobic degradation of long-chain fatty acids via beta-oxidation cycle. Catalyzes the formation of 3-oxoacyl-CoA from enoyl-CoA via L-3-hydroxyacyl-CoA. It can also use D-3-hydroxyacyl-CoA and cis-3-enoyl-CoA as substrate. The protein is Fatty acid oxidation complex subunit alpha of Salmonella choleraesuis (strain SC-B67).